A 613-amino-acid polypeptide reads, in one-letter code: UvrABC system protein C (613 aa).

The region spanning Asp13–Ile92 is the GIY-YIG domain. Residues Asp204–Leu239 enclose the UVR domain.

This sequence belongs to the UvrC family. Interacts with UvrB in an incision complex.

Its subcellular location is the cytoplasm. The UvrABC repair system catalyzes the recognition and processing of DNA lesions. UvrC both incises the 5' and 3' sides of the lesion. The N-terminal half is responsible for the 3' incision and the C-terminal half is responsible for the 5' incision. The polypeptide is UvrABC system protein C (Ruminiclostridium cellulolyticum (strain ATCC 35319 / DSM 5812 / JCM 6584 / H10) (Clostridium cellulolyticum)).